The sequence spans 331 residues: Holliday junction branch migration complex subunit RuvB (331 aa).

The segment at 1–171 (MTEPLDAALR…FGIIEHLEYY (171 aa)) is large ATPase domain (RuvB-L). ATP is bound by residues Leu9, Arg10, Gly51, Lys54, Thr55, Thr56, 118–120 (EDF), Arg161, Tyr171, and Arg208. Thr55 provides a ligand contact to Mg(2+). The tract at residues 172–242 (TPEEIGTNLL…RAQDALDKLG (71 aa)) is small ATPAse domain (RuvB-S). The interval 245–331 (TAGLDERDKK…AESDLGLYTN (87 aa)) is head domain (RuvB-H). The DNA site is built by Arg300 and Arg305.

This sequence belongs to the RuvB family. In terms of assembly, homohexamer. Forms an RuvA(8)-RuvB(12)-Holliday junction (HJ) complex. HJ DNA is sandwiched between 2 RuvA tetramers; dsDNA enters through RuvA and exits via RuvB. An RuvB hexamer assembles on each DNA strand where it exits the tetramer. Each RuvB hexamer is contacted by two RuvA subunits (via domain III) on 2 adjacent RuvB subunits; this complex drives branch migration. In the full resolvosome a probable DNA-RuvA(4)-RuvB(12)-RuvC(2) complex forms which resolves the HJ.

The protein localises to the cytoplasm. The enzyme catalyses ATP + H2O = ADP + phosphate + H(+). Functionally, the RuvA-RuvB-RuvC complex processes Holliday junction (HJ) DNA during genetic recombination and DNA repair, while the RuvA-RuvB complex plays an important role in the rescue of blocked DNA replication forks via replication fork reversal (RFR). RuvA specifically binds to HJ cruciform DNA, conferring on it an open structure. The RuvB hexamer acts as an ATP-dependent pump, pulling dsDNA into and through the RuvAB complex. RuvB forms 2 homohexamers on either side of HJ DNA bound by 1 or 2 RuvA tetramers; 4 subunits per hexamer contact DNA at a time. Coordinated motions by a converter formed by DNA-disengaged RuvB subunits stimulates ATP hydrolysis and nucleotide exchange. Immobilization of the converter enables RuvB to convert the ATP-contained energy into a lever motion, pulling 2 nucleotides of DNA out of the RuvA tetramer per ATP hydrolyzed, thus driving DNA branch migration. The RuvB motors rotate together with the DNA substrate, which together with the progressing nucleotide cycle form the mechanistic basis for DNA recombination by continuous HJ branch migration. Branch migration allows RuvC to scan DNA until it finds its consensus sequence, where it cleaves and resolves cruciform DNA. This is Holliday junction branch migration complex subunit RuvB from Deinococcus geothermalis (strain DSM 11300 / CIP 105573 / AG-3a).